Reading from the N-terminus, the 145-residue chain is uncharacterized protein (145 aa).

Positions 1 to 22 are cleaved as a signal peptide; sequence MLTRLVLSAHLSSTTSPPWTHA. N-linked (GlcNAc...) asparagine glycosylation is present at asparagine 98. A disordered region spans residues 103–145; the sequence is SSGQQRQAARQEEENSICKAHDSREGRLGYPLSAHQPGSGGPN.

Its subcellular location is the secreted. This is an uncharacterized protein from Homo sapiens (Human).